The primary structure comprises 566 residues: MPGHPGAAEQLVKTGWRSWHLGFWKALAPLQAAWDAFSQPVPASCGQLLTQLLLCASLAAAAAGLVYHWLASLLLYPPGPSAMVATVCGLLVFLSLGLVPPVRCLFALSVPTLGMEQGRRLLLSYSTATLAIAVVPNVLANVGAAGQVLRCVTEGSLESLLNTTHQLHAASRALGPTGQAGSRGLTFEAQDNGSAFYLHMLRVTQQVLEDFSGLESLARAAALGTQRVVTGLFMLGLLVESAWYLHCYLTDLRFDNIYATQQLTQRLAQAQATHLLAPPPTWLLQAAQLRLSQEELLSCLLRLGLLALLLVATAVAVATDHVAFLLAQATVDWAQKLPTVPITLTVKYDVAYTVLGFIPFLFNQLAPESPFLSVHSSYQWELRLTSARCPLLPARRPRAAAPLAAGALQLLAGSTVLLEAYARRLRHAIAASFFTAQEARRVRHLHARLQRRHDRHQGQQLPLGDPSCVPTPRPACKPPAWIDYRLDALRTESSEGEGKELWSCRDLSCNLGPVPPPCVTLGKSLHLSEPRFLHLHNDSIFTIDVTYFPRRDVVRMEGNTGHDRPG.

Residues 1–51 are Cytoplasmic-facing; the sequence is MPGHPGAAEQLVKTGWRSWHLGFWKALAPLQAAWDAFSQPVPASCGQLLTQ. A helical membrane pass occupies residues 52–72; sequence LLLCASLAAAAAGLVYHWLAS. Topologically, residues 73-81 are extracellular; the sequence is LLLYPPGPS. A helical transmembrane segment spans residues 82–102; that stretch reads AMVATVCGLLVFLSLGLVPPV. Over 103–128 the chain is Cytoplasmic; that stretch reads RCLFALSVPTLGMEQGRRLLLSYSTA. The helical transmembrane segment at 129–149 threads the bilayer; that stretch reads TLAIAVVPNVLANVGAAGQVL. Residues 150–227 are Extracellular-facing; it reads RCVTEGSLES…ARAAALGTQR (78 aa). A helical transmembrane segment spans residues 228–248; it reads VVTGLFMLGLLVESAWYLHCY. Residues 249-304 lie on the Cytoplasmic side of the membrane; the sequence is LTDLRFDNIYATQQLTQRLAQAQATHLLAPPPTWLLQAAQLRLSQEELLSCLLRLG. A helical transmembrane segment spans residues 305 to 325; that stretch reads LLALLLVATAVAVATDHVAFL. Topologically, residues 326 to 398 are extracellular; sequence LAQATVDWAQ…CPLLPARRPR (73 aa). The chain crosses the membrane as a helical span at residues 399–419; sequence AAAPLAAGALQLLAGSTVLLE. Topologically, residues 420-566 are cytoplasmic; sequence AYARRLRHAI…EGNTGHDRPG (147 aa).

Its subcellular location is the membrane. In terms of biological role, probable cell surface receptor that plays a role in cellular fusion and cell differentiation. Cooperates with DCSTAMP in modulating cell-cell fusion in both osteoclasts and foreign body giant cells (FBGCs). Involved in osteoclast bone resorption. Promotes osteoclast differentiation and may play a role in the multinucleated osteoclast maturation. The sequence is that of Osteoclast stimulatory transmembrane protein (OCSTAMP) from Homo sapiens (Human).